Here is a 356-residue protein sequence, read N- to C-terminus: Biotin synthase (356 aa).

Residues 1–28 (MTIQANVPTGDETSDEASRQTSNEASSE) form a disordered region. In terms of domain architecture, Radical SAM core spans 77 to 302 (EDVEVEGIIS…RTVLRYAGGR (226 aa)). Residues Cys-92, Cys-96, and Cys-99 each contribute to the [4Fe-4S] cluster site. [2Fe-2S] cluster contacts are provided by Cys-135, Cys-168, Cys-227, and Arg-297.

This sequence belongs to the radical SAM superfamily. Biotin synthase family. In terms of assembly, homodimer. The cofactor is [4Fe-4S] cluster. Requires [2Fe-2S] cluster as cofactor.

It catalyses the reaction (4R,5S)-dethiobiotin + (sulfur carrier)-SH + 2 reduced [2Fe-2S]-[ferredoxin] + 2 S-adenosyl-L-methionine = (sulfur carrier)-H + biotin + 2 5'-deoxyadenosine + 2 L-methionine + 2 oxidized [2Fe-2S]-[ferredoxin]. It functions in the pathway cofactor biosynthesis; biotin biosynthesis; biotin from 7,8-diaminononanoate: step 2/2. Functionally, catalyzes the conversion of dethiobiotin (DTB) to biotin by the insertion of a sulfur atom into dethiobiotin via a radical-based mechanism. In Arthrobacter sp. (strain FB24), this protein is Biotin synthase.